The chain runs to 202 residues: Pyridoxal 5'-phosphate synthase subunit PdxT (202 aa).

49 to 51 provides a ligand contact to L-glutamine; it reads GES. The Nucleophile role is filled by cysteine 81. L-glutamine contacts are provided by residues arginine 110 and 139 to 140; that span reads IR. Catalysis depends on charge relay system residues histidine 182 and glutamate 184.

It belongs to the glutaminase PdxT/SNO family. As to quaternary structure, in the presence of PdxS, forms a dodecamer of heterodimers. Only shows activity in the heterodimer.

It catalyses the reaction aldehydo-D-ribose 5-phosphate + D-glyceraldehyde 3-phosphate + L-glutamine = pyridoxal 5'-phosphate + L-glutamate + phosphate + 3 H2O + H(+). The enzyme catalyses L-glutamine + H2O = L-glutamate + NH4(+). It participates in cofactor biosynthesis; pyridoxal 5'-phosphate biosynthesis. Catalyzes the hydrolysis of glutamine to glutamate and ammonia as part of the biosynthesis of pyridoxal 5'-phosphate. The resulting ammonia molecule is channeled to the active site of PdxS. In Rhodococcus opacus (strain B4), this protein is Pyridoxal 5'-phosphate synthase subunit PdxT.